The sequence spans 115 residues: Phosphoribosyl-AMP cyclohydrolase (115 aa).

Mg(2+) is bound at residue D80. A Zn(2+)-binding site is contributed by C81. Residues D82 and D84 each coordinate Mg(2+). Zn(2+)-binding residues include C97 and C104.

This sequence belongs to the PRA-CH family. In terms of assembly, homodimer. Requires Mg(2+) as cofactor. Zn(2+) is required as a cofactor.

It is found in the cytoplasm. The enzyme catalyses 1-(5-phospho-beta-D-ribosyl)-5'-AMP + H2O = 1-(5-phospho-beta-D-ribosyl)-5-[(5-phospho-beta-D-ribosylamino)methylideneamino]imidazole-4-carboxamide. Its pathway is amino-acid biosynthesis; L-histidine biosynthesis; L-histidine from 5-phospho-alpha-D-ribose 1-diphosphate: step 3/9. In terms of biological role, catalyzes the hydrolysis of the adenine ring of phosphoribosyl-AMP. The protein is Phosphoribosyl-AMP cyclohydrolase of Mycolicibacterium paratuberculosis (strain ATCC BAA-968 / K-10) (Mycobacterium paratuberculosis).